A 446-amino-acid polypeptide reads, in one-letter code: Sphingomyelinase phosphodiesterase C (446 aa).

The N-terminal stretch at 1–26 is a signal peptide; sequence MKFRNNLTLYLIFIIVFTIYISLTIS. A glycan (N-linked (GlcNAc...) asparagine) is linked at N6. Zn(2+)-binding residues include D39 and H41. A disulfide bridge connects residues C56 and C78. A Zn(2+)-binding site is contributed by D107. N-linked (GlcNAc...) asparagine glycosylation is found at N118 and N128. N148 serves as a coordination point for Zn(2+). Residues N178, N217, N229, and N234 are each glycosylated (N-linked (GlcNAc...) asparagine). Residues H247, H287, and H289 each contribute to the Zn(2+) site. 2 N-linked (GlcNAc...) asparagine glycosylation sites follow: N342 and N357. A disulfide bond links C429 and C442.

This sequence belongs to the acid sphingomyelinase family. Zn(2+) serves as cofactor.

It is found in the secreted. This chain is Sphingomyelinase phosphodiesterase C (sgmC), found in Dictyostelium discoideum (Social amoeba).